The chain runs to 135 residues: MATFHFDLVSPEKLAFSGEVDQVDIPGVEGDFGVLAGHAPVVAAIRPGMLTVTAGGTQQKIIVLGGLAEVSEKGLTVLADVATSIEELDRAQFADTIAGMEARLTDKEGSELDKAIERLDHFKSIQSQLNTTAMH.

The protein belongs to the ATPase epsilon chain family. In terms of assembly, F-type ATPases have 2 components, CF(1) - the catalytic core - and CF(0) - the membrane proton channel. CF(1) has five subunits: alpha(3), beta(3), gamma(1), delta(1), epsilon(1). CF(0) has three main subunits: a, b and c.

The protein localises to the cell inner membrane. Functionally, produces ATP from ADP in the presence of a proton gradient across the membrane. This Nitrobacter winogradskyi (strain ATCC 25391 / DSM 10237 / CIP 104748 / NCIMB 11846 / Nb-255) protein is ATP synthase epsilon chain.